Reading from the N-terminus, the 539-residue chain is BTB/POZ domain-containing protein 6 (539 aa).

The N-terminal stretch at 1-23 is a signal peptide; sequence MLLPLACLHGRVAQCLTSLLVLA. The BTB domain maps to 137–207; it reads ADVHFIVGAL…MYSDEIDLEA (71 aa).

The protein localises to the cytoplasm. Functionally, adapter protein for the cul3 E3 ubiquitin-protein ligase complex. Involved in late neuronal development and muscle formation. In Mus musculus (Mouse), this protein is BTB/POZ domain-containing protein 6 (Btbd6).